The following is a 183-amino-acid chain: Protein US32 (183 aa).

Belongs to the herpesviridae US1 family.

The protein is Protein US32 (US32) of Homo sapiens (Human).